Here is a 706-residue protein sequence, read N- to C-terminus: Probable serine/threonine-protein kinase zyg-1 (706 aa).

The Protein kinase domain maps to 13-249; sequence YSHLKEIGKG…LTQIVLSEFM (237 aa). ATP-binding positions include 19–27 and Lys41; that span reads IGKGGFGVV. The active-site Proton acceptor is Asp131. Composition is skewed to basic and acidic residues over residues 261–290 and 323–336; these read SREH…DGRA and FDSE…RDSG. Disordered regions lie at residues 261–351 and 566–632; these read SREH…NRSQ and SPSS…VAPS. The segment covering 566–579 has biased composition (low complexity); the sequence is SPSSLMPSGSSQTS. Polar residues-rich tracts occupy residues 580–592 and 603–629; these read RFPF…NQPS and KPTS…SPSV.

The protein belongs to the protein kinase superfamily. Ser/Thr protein kinase family. Interacts with sel-10. Post-translationally, probably ubiquitinated by the SCF(sel-10) and SCF(lin-23) E3 ubiquitin ligase complexes, leading to its proteasomal degradation.

It localises to the cytoplasm. The protein localises to the cytoskeleton. It is found in the microtubule organizing center. The protein resides in the centrosome. Its subcellular location is the centriole. The enzyme catalyses L-seryl-[protein] + ATP = O-phospho-L-seryl-[protein] + ADP + H(+). It catalyses the reaction L-threonyl-[protein] + ATP = O-phospho-L-threonyl-[protein] + ADP + H(+). Functionally, protein kinase that plays a central role in centrosome duplication, control of centrosome size, spindle formation and nuclear envelope breakdown during cell divisions. Paternal copy is required to regulate synthesis of daughter centrioles prior to fertilization. Maternal copy regulates centrosome duplication during later cell cycles. Functions upstream of sas-5 and sas-6, and is required for their localization to the centrosome. Its role in nuclear envelope breakdown is mediated by the spindly-like protein spdl-1 and the RZZ complex, which in turn recruits the spindle checkpoint proteins mdf-1 and mdf-2, dynein and dynactin to unattached kinetochores. The sequence is that of Probable serine/threonine-protein kinase zyg-1 from Caenorhabditis elegans.